A 749-amino-acid polypeptide reads, in one-letter code: uncharacterized protein (749 aa).

The Helicase ATP-binding domain occupies 63 to 243 (FQYVQKGESI…QLTGKPMRLV (181 aa)). An ATP-binding site is contributed by 76 to 83 (TPTASGKT). The DEVH box signature appears at 185-188 (DELH). In terms of domain architecture, Helicase C-terminal spans 276-430 (EVNELAKEFL…SARINPENLI (155 aa)).

This sequence belongs to the helicase family.

This is an uncharacterized protein from Bacillus subtilis (strain 168).